The primary structure comprises 254 residues: Ribosomal RNA small subunit methyltransferase G (254 aa).

Residues G92, 143-144, and R156 contribute to the S-adenosyl-L-methionine site; that span reads AE.

This sequence belongs to the methyltransferase superfamily. RNA methyltransferase RsmG family.

Its subcellular location is the cytoplasm. Functionally, specifically methylates the N7 position of a guanine in 16S rRNA. This Leptospira interrogans serogroup Icterohaemorrhagiae serovar copenhageni (strain Fiocruz L1-130) protein is Ribosomal RNA small subunit methyltransferase G.